Reading from the N-terminus, the 302-residue chain is Tyrosine recombinase XerC (302 aa).

The 85-residue stretch at 6 to 90 folds into the Core-binding (CB) domain; the sequence is DLEVTCLQDY…AIKQWGEFLL (85 aa). In terms of domain architecture, Tyr recombinase spans 111 to 290; the sequence is PLPKNMDVDS…DFQHLAKVYD (180 aa). Active-site residues include Arg150, Lys174, His242, Arg245, and His268. Tyr277 functions as the O-(3'-phospho-DNA)-tyrosine intermediate in the catalytic mechanism.

It belongs to the 'phage' integrase family. XerC subfamily. As to quaternary structure, forms a cyclic heterotetrameric complex composed of two molecules of XerC and two molecules of XerD.

The protein localises to the cytoplasm. Its function is as follows. Site-specific tyrosine recombinase, which acts by catalyzing the cutting and rejoining of the recombining DNA molecules. The XerC-XerD complex is essential to convert dimers of the bacterial chromosome into monomers to permit their segregation at cell division. It also contributes to the segregational stability of plasmids. This Shewanella putrefaciens (strain CN-32 / ATCC BAA-453) protein is Tyrosine recombinase XerC.